A 185-amino-acid polypeptide reads, in one-letter code: Inner membrane-spanning protein YciB (185 aa).

5 helical membrane-spanning segments follow: residues 19 to 39 (LGGV…QIVI), 53 to 73 (IMAS…EIRY), 76 to 96 (WKVT…QFQF), 118 to 138 (TLNF…IYIS), and 149 to 169 (FKSF…GVYI).

The protein belongs to the YciB family.

It is found in the cell inner membrane. In terms of biological role, plays a role in cell envelope biogenesis, maintenance of cell envelope integrity and membrane homeostasis. In Haemophilus influenzae (strain PittEE), this protein is Inner membrane-spanning protein YciB.